Consider the following 674-residue polypeptide: MAEVPEDYDSGPDEDGELEPERPELPGLHKLYENAEPDTMAKADSKLPAEIYQEPQPETEEEDFKEGEPDSAKNVQLKPGGTSQEGIAKESKRDVPSETEPGIHQEVKSETSREMGEFFKDLEAPMDETHKESDLEPPEEAKPNVTEDVFLESAMETDPDPVPPTETMSEVSGATVRERNLELLEEETEPGVPEESLRVQHEETGLEPPEQTKQDFPSEKLGESLEETDLQPPKMTKPETPEETQRESTEKKRTEPPEQARLEFLEKEPRKSSEEAGLEPPEETQPEVPEEMQRKATEEKGTELPERTKPDFPDHKPRKSTDENVPEPLEEIKLEFPEEESRKTNEETILEQSEMMKPESPEEIRKSNEKKNPQPPEETGPVLPQEINPQVEEKTQTKPTEKILELPDETKPRETHVEFSKEDRPEPIKSKYSVGNDELEHREPKRGKLSLSDKFRKEYYALGSLRESEESIGTHYEFLQPLQKLLNVSEECSYSDPSESQTELSEFVHEKEVVDLSQELKERVSEDDETQPEKGTELQFEHLNWDPEEVAEWISQLGFPQYKECFITNFISGRKLIHVNCSNLPQMGITNFEDMKAISRHTQELLEIEEPLFKRSISLPYRDIIGLYLEQKGHTGIKSDSLTLSEFVKAAGLQDYAPEITAPEENEELPCTEP.

Residues 1–18 (MAEVPEDYDSGPDEDGEL) show a composition bias toward acidic residues. The disordered stretch occupies residues 1–448 (MAEVPEDYDS…LEHREPKRGK (448 aa)). Basic and acidic residues-rich tracts occupy residues 87–142 (IAKE…EEAK), 195–223 (ESLR…KLGE), and 236–274 (TKPE…KSSE). Over residues 276-290 (AGLEPPEETQPEVPE) the composition is skewed to acidic residues. Composition is skewed to basic and acidic residues over residues 291 to 322 (EMQR…KSTD), 330 to 346 (EEIK…KTNE), 354 to 372 (EMMK…EKKN), and 391 to 429 (VEEK…EPIK). Residues 545–608 (WDPEEVAEWI…SRHTQELLEI (64 aa)) form the SAM domain.

This is Sterile alpha motif domain-containing protein 15 (SAMD15) from Homo sapiens (Human).